Reading from the N-terminus, the 372-residue chain is N-methyl-L-tryptophan oxidase (372 aa).

4–34 is an FAD binding site; sequence DLIIIGSGSVGAAAGYYATRAGLNVLMTDAH. Cys308 is subject to S-8alpha-FAD cysteine.

The protein belongs to the MSOX/MTOX family. MTOX subfamily. Monomer. It depends on FAD as a cofactor.

The catalysed reaction is N(alpha)-methyl-L-tryptophan + O2 + H2O = L-tryptophan + formaldehyde + H2O2. Its function is as follows. Catalyzes the oxidative demethylation of N-methyl-L-tryptophan. The protein is N-methyl-L-tryptophan oxidase of Escherichia coli O81 (strain ED1a).